A 475-amino-acid chain; its full sequence is uncharacterized protein (475 aa).

This sequence to E.coli YihN.

This is an uncharacterized protein from Mycoplasma pneumoniae (strain ATCC 29342 / M129 / Subtype 1) (Mycoplasmoides pneumoniae).